Reading from the N-terminus, the 60-residue chain is Mating pheromone En-2 (60 aa).

Cystine bridges form between Cys11-Cys39, Cys24-Cys35, Cys31-Cys57, and Cys36-Cys48.

The protein localises to the secreted. Its function is as follows. Mating ciliate pheromones (or gamones) are diffusible extracellular communication signals that distinguish different intraspecific classes of cells commonly referred to as 'mating types'. They prepare the latter for conjugation by changing their cell surface properties. This is Mating pheromone En-2 from Euplotes nobilii (Ciliate).